Reading from the N-terminus, the 6885-residue chain is Nesprin-2 (6885 aa).

Residues 1 to 286 (MASSPELPTE…YVAQFLQYSK (286 aa)) are actin-binding. Over 1-6834 (MASSPELPTE…QRSFLSRVVR (6834 aa)) the chain is Cytoplasmic. 2 Calponin-homology (CH) domains span residues 31–136 (DTQK…LHFH) and 181–286 (MSAR…QYSK). 7 Spectrin repeats span residues 297–378 (GKVK…HQIN), 379–472 (AWKI…RINN), 473–575 (ILEK…KNIY), 576–680 (NVKS…KQDQ), 735–838 (VAKD…KNLT), 839–932 (DVSP…LHHE), and 933–1034 (LSLY…KCAS). Positions 297 to 6782 (GKVKDAMGWL…PASPLPSFDE (6486 aa)) form a coiled coil. Serine 841 is subject to Phosphoserine. Lysine 955 carries the N6-acetyllysine modification. Residues 1042-1059 (PTAGGTSKNEGTITTSEN) are compositionally biased toward polar residues. The segment at 1042–1084 (PTAGGTSKNEGTITTSENRGGDPHSEAPFAKSDNQPSTEKAME) is disordered. Spectrin repeat units lie at residues 1121 to 1212 (TYRD…TLNT), 1263 to 1323 (NIQD…DTLK), 1324 to 1419 (ALED…YGVQ), 1420 to 1524 (EEFT…ALVT), 1525 to 1636 (ECLE…KTED), 1637 to 1738 (YYEN…TGES), 1739 to 1830 (NCHA…TKKS), 1831 to 1938 (VLQD…AKEL), 1939 to 2036 (EDSL…EEED), 2037 to 2132 (KLLP…LAST), 2133 to 2243 (YLSH…SVQN), and 2244 to 2360 (LDGH…LNSI). The segment covering 2368-2382 (EKKGKFTLPGREKQA) has biased composition (basic and acidic residues). The tract at residues 2368-2394 (EKKGKFTLPGREKQATSDVQESTQESA) is disordered. The span at 2383–2393 (TSDVQESTQES) shows a compositional bias: polar residues. Spectrin repeat units follow at residues 2432-2513 (DERK…TLKK), 2514-2620 (NKES…KYSQ), 2621-2717 (QVVE…ETLE), 2718-2831 (PLHL…QLEF), 2832-2933 (KLEE…FIQN), 2934-3036 (TCNE…EKIK), 3037-3142 (QLDT…NMVL), 3143-3248 (ELSP…DLRT), 3249-3352 (NVLN…AQET), 3353-3465 (EAER…MWCE), 3466-3573 (ELKQ…KVQK), 3574-3679 (NKEL…SNEV), 3680-3777 (LKSS…ECRT), 3778-3880 (SQLN…KIME), 3881-3986 (SLPQ…VTQE), and 3987-4086 (QNEL…LPAV). The residue at position 2781 (serine 2781) is a Phosphoserine. 2 stretches are compositionally biased toward basic and acidic residues: residues 4073-4083 (QEQEGVERDRL) and 4093-4102 (VAERDASERK). 4 disordered regions span residues 4073 to 4162 (QEQE…SGTI), 4184 to 4232 (DSLN…KTRP), 4335 to 4363 (EKHS…PVNL), and 4416 to 4448 (HDND…QGQN). Serine 4108 bears the Phosphoserine mark. Composition is skewed to basic and acidic residues over residues 4122–4134 (SSVK…EKAE) and 4144–4155 (WKHDKDMEEDRA). The stretch at 4229 to 4348 (KTRPEPTEVL…EDQHPTILKK (120 aa)) is one Spectrin 36 repeat. Basic and acidic residues predominate over residues 4335–4356 (EKHSEDQHPTILKKSSEPEHQE). Over residues 4421–4434 (TQESSASNQASSPE) the composition is skewed to polar residues. 17 Spectrin repeats span residues 4520 to 4639 (NMTE…RSYQ), 4640 to 4727 (NEIK…RARY), 4728 to 4837 (TELS…QSLL), 4838 to 4943 (QKWE…QALL), 4944 to 5051 (KHLL…QEKL), 5052 to 5164 (HQLQ…KIQH), 5165 to 5266 (LEQL…TQVN), 5267 to 5391 (QLKT…KAYS), 5392 to 5487 (NAHG…MLLV), 5488 to 5589 (KANE…CSEL), 5590 to 5704 (QGIG…QWQD), 5705 to 5799 (FTTS…PQLA), 5800 to 5907 (EMIK…RVAI), 5908 to 6017 (RKQE…VKKL), 6018 to 6135 (KETF…EETW), 6136 to 6243 (RLWQ…LRHF), and 6244 to 6355 (TNQR…PGLE). Serine 5785 is subject to Phosphoserine. Acidic residues predominate over residues 6354–6367 (LEDEKEASENETDM). The tract at residues 6354–6508 (LEDEKEASEN…GTDGGKEGPR (155 aa)) is disordered. 7 positions are modified to phosphoserine: serine 6361, serine 6384, serine 6411, serine 6428, serine 6429, serine 6430, and serine 6459. Over residues 6368-6384 (EDPREIQTDSWRKRGES) the composition is skewed to basic and acidic residues. Spectrin repeat units lie at residues 6461 to 6549 (SCPE…KLKI), 6550 to 6665 (KQNL…QCQD), and 6666 to 6782 (FHQL…SFDE). The segment covering 6463-6474 (PEHHYKQMEGDR) has biased composition (basic and acidic residues). A compositionally biased stretch (pro residues) spans 6477 to 6489 (PPVPPASSTPYKP). Residues 6490-6499 (PYGKLLLPPG) show a composition bias toward low complexity. Residues 6769–6824 (GTQNPASPLPSFDEVDSGDQPPATSVPAPRAKQFRAVRTTEGEEETESRVPGSTRP) form a disordered region. Residues 6826 to 6885 (RSFLSRVVRAALPLQLLLLLLLLLACLLPSSEEDYSCTQANNFARSFYPMLRYTNGPPPT) enclose the KASH domain. A helical; Anchor for type IV membrane protein transmembrane segment spans residues 6835–6855 (AALPLQLLLLLLLLLACLLPS). The Perinuclear space segment spans residues 6856–6885 (SEEDYSCTQANNFARSFYPMLRYTNGPPPT). Positions 6872–6885 (FYPMLRYTNGPPPT) are sufficient for interaction with SUN2.

This sequence belongs to the nesprin family. Core component of LINC complexes which are composed of inner nuclear membrane SUN domain-containing proteins coupled to outer nuclear membrane KASH domain-containing nesprins. SUN and KASH domain-containing proteins seem to bind each other promiscuously; however, some LINC complex constituents are tissue- or cell type-specific. At least SUN1/2-containing core LINC complexes are proposed to be hexameric composed of three protomers of each KASH and SUN domain-containing protein. The SUN2:SYNE2/KASH2 complex is a heterohexamer; the homotrimeric cloverleave-like conformation of the SUN domain is a prerequisite for LINC complex formation in which three separate SYNE2/KASH2 peptides bind at the interface of adjacent SUN domains. Interacts with EMD, LMNA, MKS3 and F-actin via its N-terminal domain. Interacts with DCTN1 and DYNC1I1/2; suggesting the association with the dynein-dynactin motor complex. Associates with kinesin motor complexes. Interacts with TMEM67. Interacts (via KASH domain) with TMEM258. Interacts with BROX; this interaction promotes SYN2 ubiquitination and facilitates the relaxation of mechanical stress imposed by compressive actin fibers at the rupture site. In terms of processing, the disulfid bond with SUN2 is required for stability of the SUN2:SYNE2/KASH2 LINC complex under tensile forces though not required for the interaction. Ubiquitinated, targeting it for degradation. Widely expressed, with higher level in kidney, adult and fetal liver, stomach and placenta. Weakly expressed in skeletal muscle and brain. Isoform 5 is highly expressed in pancreas, skeletal muscle and heart.

It localises to the nucleus outer membrane. The protein resides in the sarcoplasmic reticulum membrane. The protein localises to the cell membrane. Its subcellular location is the cytoplasm. It is found in the cytoskeleton. It localises to the mitochondrion. The protein resides in the nucleus. The protein localises to the nucleoplasm. Its subcellular location is the myofibril. It is found in the sarcomere. It localises to the z line. The protein resides in the cell junction. The protein localises to the focal adhesion. Its function is as follows. Multi-isomeric modular protein which forms a linking network between organelles and the actin cytoskeleton to maintain the subcellular spatial organization. As a component of the LINC (LInker of Nucleoskeleton and Cytoskeleton) complex involved in the connection between the nuclear lamina and the cytoskeleton. The nucleocytoplasmic interactions established by the LINC complex play an important role in the transmission of mechanical forces across the nuclear envelope and in nuclear movement and positioning. Specifically, SYNE2 and SUN2 assemble in arrays of transmembrane actin-associated nuclear (TAN) lines which are bound to F-actin cables and couple the nucleus to retrograde actin flow during actin-dependent nuclear movement. May be involved in nucleus-centrosome attachment. During interkinetic nuclear migration (INM) at G2 phase and nuclear migration in neural progenitors its LINC complex association with SUN1/2 and probable association with cytoplasmic dynein-dynactin motor complexes functions to pull the nucleus toward the centrosome; SYNE1 and SYNE2 may act redundantly. During INM at G1 phase mediates respective LINC complex association with kinesin to push the nucleus away from the centrosome. Involved in nuclear migration in retinal photoreceptor progenitors. Required for centrosome migration to the apical cell surface during early ciliogenesis. Facilitates the relaxation of mechanical stress imposed by compressive actin fibers at the rupture site through its nteraction with SYN2. The protein is Nesprin-2 of Homo sapiens (Human).